Reading from the N-terminus, the 202-residue chain is Endothelin-1 (202 aa).

The signal sequence occupies residues 1-25 (MDYLPVLFSLLLVVFQGAPEAAVLG). The propeptide occupies 26-50 (AELSTGPDSGGEKPAPSAPWRPRRS). The segment at 28–48 (LSTGPDSGGEKPAPSAPWRPR) is disordered. Disulfide bonds link Cys-53-Cys-67 and Cys-55-Cys-63. Residues 74–202 (VNTPEHIVPY…EKKVTHNRTH (129 aa)) constitute a propeptide that is removed on maturation. The tract at residues 110 to 124 (CQCASQKDKKCWTFC) is endothelin-like.

This sequence belongs to the endothelin/sarafotoxin family.

It localises to the secreted. Endothelins are endothelium-derived vasoconstrictor peptides. Probable ligand for G-protein coupled receptors EDNRA and EDNRB which activates PTK2B, BCAR1, BCAR3 and, GTPases RAP1 and RHOA cascade in glomerular mesangial cells. Also binds the DEAR/FBXW7-AS1 receptor. Promotes mesenteric arterial wall remodeling via activation of ROCK signaling and subsequent colocalization of NFATC3 with F-actin filaments. NFATC3 then translocates to the nucleus where it subsequently promotes the transcription of the smooth muscle hypertrophy and differentiation marker ACTA2. The chain is Endothelin-1 (EDN1) from Felis catus (Cat).